A 319-amino-acid chain; its full sequence is Acetyl-coenzyme A carboxylase carboxyl transferase subunit alpha (319 aa).

Residues 35–296 enclose the CoA carboxyltransferase C-terminal domain; it reads NIDEEVQRLR…KTQLLADLED (262 aa).

It belongs to the AccA family. Acetyl-CoA carboxylase is a heterohexamer composed of biotin carboxyl carrier protein (AccB), biotin carboxylase (AccC) and two subunits each of ACCase subunit alpha (AccA) and ACCase subunit beta (AccD).

It localises to the cytoplasm. It catalyses the reaction N(6)-carboxybiotinyl-L-lysyl-[protein] + acetyl-CoA = N(6)-biotinyl-L-lysyl-[protein] + malonyl-CoA. It participates in lipid metabolism; malonyl-CoA biosynthesis; malonyl-CoA from acetyl-CoA: step 1/1. Functionally, component of the acetyl coenzyme A carboxylase (ACC) complex. First, biotin carboxylase catalyzes the carboxylation of biotin on its carrier protein (BCCP) and then the CO(2) group is transferred by the carboxyltransferase to acetyl-CoA to form malonyl-CoA. In Edwardsiella ictaluri (strain 93-146), this protein is Acetyl-coenzyme A carboxylase carboxyl transferase subunit alpha.